The sequence spans 328 residues: Olfactory receptor 4A16 (328 aa).

At 1–23 (MRPSSNVTEFVLLGLTQDPDVKK) the chain is on the extracellular side. N-linked (GlcNAc...) asparagine glycosylation occurs at Asn6. A helical transmembrane segment spans residues 24–47 (TLFVMFLLIYIVTMVGNLLIWVTT). Topologically, residues 48 to 55 (IGSPSLGS) are cytoplasmic. The chain crosses the membrane as a helical span at residues 56 to 77 (LMYFFLAYLSLMDAIYSTAMSP). Over 78 to 98 (KLMIDLLCDKIAISLSACMGQ) the chain is Extracellular. The cysteines at positions 95 and 187 are disulfide-linked. A helical transmembrane segment spans residues 99 to 118 (LFIEHLLGGAEVFLLVVMAY). Residues 119-137 (DRYVAISKPLHYLNIMNRL) lie on the Cytoplasmic side of the membrane. A helical membrane pass occupies residues 138-156 (VCILLLVVAMIGGFVHSVV). Residues 157-193 (QIVFLYSLPICGPNVIDHSVCDMYPLLELLCLDTYFI) lie on the Extracellular side of the membrane. The chain crosses the membrane as a helical span at residues 194–217 (GLTVVANGGIICMVIFTFLLISCG). Residues 218-233 (VILNFLKTYSQEERHK) lie on the Cytoplasmic side of the membrane. A helical transmembrane segment spans residues 234–256 (ALPTCISHIIVVALVFVPCIFMY). Over 257–267 (VRPVSNFPFDK) the chain is Extracellular. The helical transmembrane segment at 268–287 (LMTVFYSIITLMLNPLIYSL) threads the bilayer. Residues 288-328 (RQSEMKNAMKNLWCEKLSIVRKRVSPTLNIFIPSSKATNRR) lie on the Cytoplasmic side of the membrane.

Belongs to the G-protein coupled receptor 1 family.

Its subcellular location is the cell membrane. In terms of biological role, odorant receptor. The polypeptide is Olfactory receptor 4A16 (OR4A16) (Homo sapiens (Human)).